A 181-amino-acid chain; its full sequence is Cyclic phosphodiesterase (181 aa).

His-42 serves as the catalytic Proton donor/acceptor. Substrate is bound at residue Thr-44. Cystine bridges form between Cys-64/Cys-177 and Cys-104/Cys-110. Catalysis depends on His-119, which acts as the Proton donor/acceptor. Residues Ser-121 and Tyr-124 each coordinate substrate.

Belongs to the 2H phosphoesterase superfamily. CPD1 family. In terms of tissue distribution, expressed in leaves, stems, roots, floral buds and germinating seeds.

It is found in the cytoplasm. The enzyme catalyses ADP-alpha-D-ribose 1'',2''-cyclic phosphate + H2O = ADP-alpha-D-ribose 1''-phosphate + H(+). It catalyses the reaction 2',3'-cyclophospho-AMP + H2O = adenosine 2'-phosphate + H(+). It carries out the reaction 2',3'-cyclophospho-GMP + H2O = guanosine 2'-phosphate + H(+). The catalysed reaction is 2',3'-cyclophospho-UMP + H2O = uridine 2'-phosphate + H(+). The enzyme catalyses 2',3'-cyclophospho-CMP + H2O = cytidine 2'-phosphate + H(+). Inhibited by Cu(2+) and Zn(2+) at 0.5 mM by 93 and 87% respectively. Not inhibited by Ca(2+), Mg(2+), Co(2+), Ni(2+), and EDTA at 0.5 mM. Hydrolyzes ADP-ribose 1'',2''-cyclic phosphate (Appr&gt;1) that is produced during tRNA splicing into ADP-ribose 1''-phosphate (Appr-1''p). Also acts on nucleoside 2',3'-cyclic phosphates. The protein is Cyclic phosphodiesterase of Arabidopsis thaliana (Mouse-ear cress).